The sequence spans 90 residues: Probable Fe(2+)-trafficking protein (90 aa).

This sequence belongs to the Fe(2+)-trafficking protein family. Monomer.

Could be a mediator in iron transactions between iron acquisition and iron-requiring processes, such as synthesis and/or repair of Fe-S clusters in biosynthetic enzymes. This chain is Probable Fe(2+)-trafficking protein, found in Hamiltonella defensa subsp. Acyrthosiphon pisum (strain 5AT).